The chain runs to 517 residues: 2,4,6-trichlorophenol monooxygenase (517 aa).

Belongs to the FADH(2)-utilizing monooxygenase family. As to quaternary structure, homotetramer in solution.

The enzyme catalyses 2,4,6-trichlorophenol + FADH2 + O2 = 2-chloro-6-hydroxy-1,4-benzoquinone + FAD + 2 chloride + 3 H(+). The catalysed reaction is 2,4,6-trichlorophenol + FADH2 + O2 = 2,6-dichlorobenzoquinone + FAD + chloride + H2O + H(+). It catalyses the reaction 2,6-dichlorobenzoquinone + H2O = 2-chloro-6-hydroxy-1,4-benzoquinone + chloride + 2 H(+). The protein operates within aromatic compound metabolism. It participates in xenobiotic degradation. Involved in the degradation of 2,4,6-trichlorophenol (2,4,6-TCP). Catalyzes the conversion of 2,4,6-TCP to 6-chlorohydroxyquinol (6-CHQ). The monooxygenase oxidizes 2,4,6-TCP to 2,6-dichloroquinone (2,6-DCBQ), which remains with the enzyme and is hydrolyzed to 2-chlorohydroxyquinone. 2-chlorohydroxyquinone is chemically reduced by ascorbate and NADH to 6-chlorohydroxyquinol (6-CHQ). The polypeptide is 2,4,6-trichlorophenol monooxygenase (Cupriavidus pinatubonensis (strain JMP 134 / LMG 1197) (Cupriavidus necator (strain JMP 134))).